The sequence spans 60 residues: Large ribosomal subunit protein uL30 (60 aa).

It belongs to the universal ribosomal protein uL30 family. In terms of assembly, part of the 50S ribosomal subunit.

The polypeptide is Large ribosomal subunit protein uL30 (Clavibacter michiganensis subsp. michiganensis (strain NCPPB 382)).